The sequence spans 98 residues: Co-chaperonin GroES 5 (98 aa).

It belongs to the GroES chaperonin family. Heptamer of 7 subunits arranged in a ring. Interacts with the chaperonin GroEL.

The protein resides in the cytoplasm. Functionally, together with the chaperonin GroEL, plays an essential role in assisting protein folding. The GroEL-GroES system forms a nano-cage that allows encapsulation of the non-native substrate proteins and provides a physical environment optimized to promote and accelerate protein folding. GroES binds to the apical surface of the GroEL ring, thereby capping the opening of the GroEL channel. The chain is Co-chaperonin GroES 5 from Mesorhizobium japonicum (strain LMG 29417 / CECT 9101 / MAFF 303099) (Mesorhizobium loti (strain MAFF 303099)).